The sequence spans 104 residues: Large ribosomal subunit protein uL23 (104 aa).

The protein belongs to the universal ribosomal protein uL23 family. Part of the 50S ribosomal subunit. Contacts protein L29, and trigger factor when it is bound to the ribosome.

Its function is as follows. One of the early assembly proteins it binds 23S rRNA. One of the proteins that surrounds the polypeptide exit tunnel on the outside of the ribosome. Forms the main docking site for trigger factor binding to the ribosome. This is Large ribosomal subunit protein uL23 from Polynucleobacter asymbioticus (strain DSM 18221 / CIP 109841 / QLW-P1DMWA-1) (Polynucleobacter necessarius subsp. asymbioticus).